The sequence spans 81 residues: Defensin-like protein 45 (81 aa).

An N-terminal signal peptide occupies residues 1–27 (MAITKTSATFVLLIILAASLSNFNVLA). 4 disulfide bridges follow: Cys40–Cys79, Cys44–Cys67, Cys53–Cys77, and Cys57–Cys78.

It belongs to the DEFL family.

It is found in the secreted. This is Defensin-like protein 45 from Arabidopsis thaliana (Mouse-ear cress).